Here is a 467-residue protein sequence, read N- to C-terminus: MSSAPTTPPSVDKVDGFSRKSVRKARQKRSQSSSQFRSQGKPIELTPLPLLKDVPTSEQPELFLKKLQQCCVIFDFMDTLSDLKMKEYKRSTLNELVDYITISRGCLTEQTYPEVVRMVSCNIFRTLPPSDSNEFDPEEDEPTLEASWPHLQLVYEFFIRFLESQEFQPSIAKKYIDQKFVLQLLELFDSEDPRERDYLKTVLHRIYGKFLGLRAFIRKQINNIFLRFVYETEHFNGVAELLEILGSIINGFALPLKAEHKQFLVKVLIPLHTVRSLSLFHAQLAYCIVQFLEKDPSLTEPVIRGLMKFWPKTCSQKEVMFLGELEEILDVIEPSQFVKIQEPLFKQIAKCVSSPHFQVAERALYYWNNEYIMSLIEENSNVILPIMFSSLYRISKEHWNPAIVALVYNVLKAFMEMNSTMFDELTATYKSDRQREKKKEKEREELWKKLEDLELKRGLRRDGIIPT.

A disordered region spans residues 1-39 (MSSAPTTPPSVDKVDGFSRKSVRKARQKRSQSSSQFRSQ). An N-acetylserine modification is found at S2. T7 carries the post-translational modification Phosphothreonine. The span at 20–29 (KSVRKARQKR) shows a compositional bias: basic residues. Phosphoserine is present on residues S30, S32, and S34. The span at 30-39 (SQSSSQFRSQ) shows a compositional bias: low complexity.

It belongs to the phosphatase 2A regulatory subunit B56 family. PP2A consists of a common heterodimeric core enzyme, composed of a 36 kDa catalytic subunit (subunit C) and a 65 kDa constant regulatory subunit (PR65 or subunit A), that associates with a variety of regulatory subunits. Proteins that associate with the core dimer include three families of regulatory subunits B (the R2/B/PR55/B55, R3/B''/PR72/PR130/PR59 and R5/B'/B56 families), the 48 kDa variable regulatory subunit, viral proteins, and cell signaling molecules. Interacts with SGO1. Found in a complex with at least ARL2, PPP2CB; PPP2R1A, PPP2R2A, PPP2R5E and TBCD.

The protein localises to the cytoplasm. Functionally, the B regulatory subunit might modulate substrate selectivity and catalytic activity, and might also direct the localization of the catalytic enzyme to a particular subcellular compartment. Interacts with cyclin G in vitro. This is Serine/threonine-protein phosphatase 2A 56 kDa regulatory subunit epsilon isoform (Ppp2r5e) from Mus musculus (Mouse).